Here is a 987-residue protein sequence, read N- to C-terminus: Valine--tRNA ligase (987 aa).

A 'HIGH' region motif is present at residues 45-55; sequence PNVTGSLHMGH. A 'KMSKS' region motif is present at residues 634–638; it reads KMSKS. Lys-637 is a binding site for ATP. The stretch at 917-985 forms a coiled coil; that stretch reads VIDIGAEKAR…LSAALARLSE (69 aa).

This sequence belongs to the class-I aminoacyl-tRNA synthetase family. ValS type 1 subfamily. As to quaternary structure, monomer.

It is found in the cytoplasm. The catalysed reaction is tRNA(Val) + L-valine + ATP = L-valyl-tRNA(Val) + AMP + diphosphate. In terms of biological role, catalyzes the attachment of valine to tRNA(Val). As ValRS can inadvertently accommodate and process structurally similar amino acids such as threonine, to avoid such errors, it has a 'posttransfer' editing activity that hydrolyzes mischarged Thr-tRNA(Val) in a tRNA-dependent manner. In Cereibacter sphaeroides (strain ATCC 17023 / DSM 158 / JCM 6121 / CCUG 31486 / LMG 2827 / NBRC 12203 / NCIMB 8253 / ATH 2.4.1.) (Rhodobacter sphaeroides), this protein is Valine--tRNA ligase.